Consider the following 99-residue polypeptide: uncharacterized protein (99 aa).

This is an uncharacterized protein from Salmonella typhimurium (strain LT2 / SGSC1412 / ATCC 700720).